Consider the following 97-residue polypeptide: Small ribosomal subunit protein bS20 (97 aa).

Belongs to the bacterial ribosomal protein bS20 family.

Functionally, binds directly to 16S ribosomal RNA. This chain is Small ribosomal subunit protein bS20, found in Prochlorococcus marinus subsp. pastoris (strain CCMP1986 / NIES-2087 / MED4).